The chain runs to 497 residues: COP9 signalosome complex subunit 3 (497 aa).

One can recognise a PCI domain in the interval 233-408 (QAFDAFERCV…DGSPAYLTFL (176 aa)).

Belongs to the CSN3 family. Component of the COP9 signalosome (CSN) complex.

Its subcellular location is the cytoplasm. It localises to the nucleus. In terms of biological role, component of the COP9 signalosome (CSN) complex that acts as an regulator of the ubiquitin (Ubl) conjugation pathway by mediating the deneddylation of the cullin subunit of SCF-type E3 ubiquitin-protein ligase complexes. The CSN complex is involved in the regulation of the circadian clock through its control of the stability of the SCF(FWD1) complex. The protein is COP9 signalosome complex subunit 3 (csn-3) of Neurospora crassa (strain ATCC 24698 / 74-OR23-1A / CBS 708.71 / DSM 1257 / FGSC 987).